Consider the following 315-residue polypeptide: tRNA-dihydrouridine(16) synthase (315 aa).

FMN contacts are provided by residues Pro-7–Glu-9 and Gln-68. Residue Cys-98 is the Proton donor of the active site. Residues Lys-139, Asn-200 to Glu-202, and Gly-224 to Arg-225 contribute to the FMN site.

It belongs to the Dus family. DusC subfamily. FMN is required as a cofactor.

The enzyme catalyses 5,6-dihydrouridine(16) in tRNA + NADP(+) = uridine(16) in tRNA + NADPH + H(+). It catalyses the reaction 5,6-dihydrouridine(16) in tRNA + NAD(+) = uridine(16) in tRNA + NADH + H(+). In terms of biological role, catalyzes the synthesis of 5,6-dihydrouridine (D), a modified base found in the D-loop of most tRNAs, via the reduction of the C5-C6 double bond in target uridines. Specifically modifies U16 in tRNAs. In Shigella flexneri, this protein is tRNA-dihydrouridine(16) synthase.